The primary structure comprises 162 residues: General odorant-binding protein 2 (162 aa).

An N-terminal signal peptide occupies residues 1–18 (MTSKSCLLLVAMVTLTTS). 3 disulfide bridges follow: cysteine 40–cysteine 75, cysteine 71–cysteine 129, and cysteine 118–cysteine 138.

It belongs to the PBP/GOBP family. Antenna.

Functionally, present in the aqueous fluid surrounding olfactory sensory dendrites and are thought to aid in the capture and transport of hydrophobic odorants into and through this fluid. The sequence is that of General odorant-binding protein 2 from Heliothis virescens (Tobacco budworm moth).